We begin with the raw amino-acid sequence, 113 residues long: Hydrogenase maturation factor HypA (113 aa).

Position 2 (His2) interacts with Ni(2+). Zn(2+) is bound by residues Cys73, Cys76, Cys89, and Cys92.

It belongs to the HypA/HybF family.

In terms of biological role, involved in the maturation of [NiFe] hydrogenases. Required for nickel insertion into the metal center of the hydrogenase. This is Hydrogenase maturation factor HypA from Aeromonas hydrophila subsp. hydrophila (strain ATCC 7966 / DSM 30187 / BCRC 13018 / CCUG 14551 / JCM 1027 / KCTC 2358 / NCIMB 9240 / NCTC 8049).